Here is a 361-residue protein sequence, read N- to C-terminus: tRNA/tmRNA (uracil-C(5))-methyltransferase (361 aa).

S-adenosyl-L-methionine is bound by residues Q185, Y213, N218, E234, and D294. The Nucleophile role is filled by C319. The active-site Proton acceptor is E353.

Belongs to the class I-like SAM-binding methyltransferase superfamily. RNA M5U methyltransferase family. TrmA subfamily.

It carries out the reaction uridine(54) in tRNA + S-adenosyl-L-methionine = 5-methyluridine(54) in tRNA + S-adenosyl-L-homocysteine + H(+). The catalysed reaction is uridine(341) in tmRNA + S-adenosyl-L-methionine = 5-methyluridine(341) in tmRNA + S-adenosyl-L-homocysteine + H(+). Dual-specificity methyltransferase that catalyzes the formation of 5-methyluridine at position 54 (m5U54) in all tRNAs, and that of position 341 (m5U341) in tmRNA (transfer-mRNA). The polypeptide is tRNA/tmRNA (uracil-C(5))-methyltransferase (Pseudomonas putida (strain GB-1)).